The chain runs to 284 residues: Quinate/shikimate dehydrogenase (NAD(+)) (284 aa).

2 residues coordinate shikimate: Ser18 and Thr70. L-quinate contacts are provided by residues 18–20 and Thr70; that span reads SRT. The Proton acceptor role is filled by Tyr73. Shikimate-binding residues include Lys74, Asn95, and Asp111. The L-quinate site is built by Lys74, Asn95, and Asp111. Residues 137-138, Asp159, Arg164, 203-206, Ala214, Val229, and Gly252 each bind NAD(+); these read GG and TPMG. Gln259 serves as a coordination point for shikimate. An L-quinate-binding site is contributed by Gln259.

It belongs to the shikimate dehydrogenase family. Homodimer.

The enzyme catalyses L-quinate + NAD(+) = 3-dehydroquinate + NADH + H(+). It catalyses the reaction shikimate + NAD(+) = 3-dehydroshikimate + NADH + H(+). Its pathway is metabolic intermediate biosynthesis; chorismate biosynthesis; chorismate from D-erythrose 4-phosphate and phosphoenolpyruvate: step 4/7. The protein operates within aromatic compound metabolism; 3,4-dihydroxybenzoate biosynthesis; 3-dehydroquinate from D-quinate (NAD(+) route). In terms of biological role, involved in the biosynthesis of the chorismate, which leads to the biosynthesis of aromatic amino acids, and plays a key role in the quinate degradation pathway. Catalyzes the NAD(+)-dependent oxidation of both quinate and shikimate to 3-dehydroquinate and 3-dehydroshikimate, respectively. It can only use NAD. In Corynebacterium efficiens (strain DSM 44549 / YS-314 / AJ 12310 / JCM 11189 / NBRC 100395), this protein is Quinate/shikimate dehydrogenase (NAD(+)).